We begin with the raw amino-acid sequence, 58 residues long: Succinate dehydrogenase subunit 8A, mitochondrial (58 aa).

Component of complex II composed of eight subunits in plants: four classical SDH subunits SDH1, SDH2, SDH3 and SDH4 (a flavoprotein (FP), an iron-sulfur protein (IP), and a cytochrome b composed of a large and a small subunit.), as well as four subunits unknown in mitochondria from bacteria and heterotrophic eukaryotes.

The protein resides in the mitochondrion inner membrane. Its pathway is carbohydrate metabolism; tricarboxylic acid cycle. In Oryza sativa subsp. japonica (Rice), this protein is Succinate dehydrogenase subunit 8A, mitochondrial.